The following is a 467-amino-acid chain: MAKSKSSQGASGARRKPAPSLYQHISSFKPQFSTRVDDVLHFSKTLTWRSEIIPDKSKGTLTTSLLYSQGSDIYEIDTTLPLKTFYDDDDDDDNDDDDEEGNGKTKSAATPNPEYGDAFQDVEGKPLRPKWIYQGETVAKMQYLESSDDSTAIAMSKNGSLAWFRDEIKVPVHIVQEMMGPATRYSSIHSLTRPGSLAVSDFDVSTNMDTVVKSQSNGYEEDSILKIIDNSDRPGDILRTVHVPGTNVAHSVRFFNNHLFASCSDDNILRFWDTRTADKPLWTLSEPKNGRLTSFDSSQVTENLFVTGFSTGVIKLWDARAVQLATTDLTHRQNGEEPIQNEIAKLFHSGGDSVVDILFSQTSATEFVTVGGTGNVYHWDMEYSFSRNDDDNEDEVRVAAPEELQGQCLKFFHTGGTRRSSNQFGKRNTVALHPVINDFVGTVDSDSLVTAYKPFLASDFIGRGYDD.

Residues 1–12 are compositionally biased toward low complexity; that stretch reads MAKSKSSQGASG. 2 disordered regions span residues 1–22 and 84–121; these read MAKSKSSQGASGARRKPAPSLY and TFYDDDDDDDNDDDDEEGNGKTKSAATPNPEYGDAFQD. The span at 87 to 100 shows a compositional bias: acidic residues; it reads DDDDDDDNDDDDEE. WD repeat units follow at residues 244 to 282, 287 to 327, and 349 to 389; these read PGTNVAHSVRFFNNHLFASCSDDNILRFWDTRTADKPLW, PKNG…LATT, and SGGD…SRND.

Functionally, transcriptional modulator with roles in meiotic regulation and silencing. The chain is Transcriptional modulator WTM2 (WTM2) from Saccharomyces cerevisiae (strain ATCC 204508 / S288c) (Baker's yeast).